The primary structure comprises 398 residues: S-adenosylmethionine synthase (398 aa).

136-141 (GTGSSD) provides a ligand contact to ATP.

The protein belongs to the AdoMet synthase 2 family. It depends on Mg(2+) as a cofactor.

It carries out the reaction L-methionine + ATP + H2O = S-adenosyl-L-methionine + phosphate + diphosphate. The protein operates within amino-acid biosynthesis; S-adenosyl-L-methionine biosynthesis; S-adenosyl-L-methionine from L-methionine: step 1/1. Catalyzes the formation of S-adenosylmethionine from methionine and ATP. This chain is S-adenosylmethionine synthase, found in Methanosarcina mazei (strain ATCC BAA-159 / DSM 3647 / Goe1 / Go1 / JCM 11833 / OCM 88) (Methanosarcina frisia).